We begin with the raw amino-acid sequence, 424 residues long: ATP-sensitive inward rectifier potassium channel 8 (424 aa).

The Cytoplasmic portion of the chain corresponds to 1–69 (MLARKSIIPE…IFTTLVDLKW (69 aa)). Ser6 carries the phosphoserine modification. Residues 70–94 (RHTLVIFTMSFLCSWLLFAIMWWLV) form a helical membrane-spanning segment. The Extracellular portion of the chain corresponds to 95–126 (AFAHGDIYAYMEKGTMEKSGLESAVCVTNVRS). The segment at residues 127-138 (FTSAFLFSIEVQ) is an intramembrane region (helical; Pore-forming). Positions 139-145 (VTIGFGG) form an intramembrane region, pore-forming. Residues 140-145 (TIGFGG) carry the Selectivity filter motif. Over 146 to 154 (RMMTEECPL) the chain is Extracellular. The helical transmembrane segment at 155-176 (AITVLILQNIVGLIINAVMLGC) threads the bilayer. Over 177 to 424 (IFMKTAQAHR…PEGNQCPSES (248 aa)) the chain is Cytoplasmic. A disordered region spans residues 373 to 409 (ELSHQNSLRKRNSMRRNNSMRRNNSIRRNNSSLMVPK). Over residues 387–404 (RRNNSMRRNNSIRRNNSS) the composition is skewed to low complexity.

Belongs to the inward rectifier-type potassium channel (TC 1.A.2.1) family. KCNJ8 subfamily. In terms of assembly, interacts with ABCC9.

It is found in the membrane. The enzyme catalyses K(+)(in) = K(+)(out). Functionally, inward rectifier potassium channels are characterized by a greater tendency to allow potassium to flow into the cell rather than out of it. Their voltage dependence is regulated by the concentration of extracellular potassium; as external potassium is raised, the voltage range of the channel opening shifts to more positive voltages. The inward rectification is mainly due to the blockage of outward current by internal magnesium. This channel is activated by internal ATP and can be blocked by external barium. Can form a sulfonylurea-sensitive but ATP-insensitive potassium channel with ABCC9. In Mus musculus (Mouse), this protein is ATP-sensitive inward rectifier potassium channel 8 (Kcnj8).